A 213-amino-acid polypeptide reads, in one-letter code: Kiwellin (213 aa).

Residues 1-24 (MAQLALLLLSLFLTLISLAPPGAS) form the signal peptide. Disulfide bonds link C28/C60, C32/C44, and C38/C49. Residues P65 and P67 each carry the 4-hydroxyproline modification. Intrachain disulfides connect C72/C90, C80/C172, C119/C144, and C166/C172. Residues 91 to 121 (SPPVTSSTPAKLTNNDFSEGGDDGGPSECDE) form a disordered region. Residues 93-107 (PVTSSTPAKLTNNDF) are compositionally biased toward polar residues.

The protein belongs to the kiwellin family. Post-translationally, undergoes proteolytic cleavage by actinidin to produce kissper and KiTH. Three forms of KiTH are produced by cleavage at different sites, the main form produced in vivo is KiTH-1.

The protein localises to the secreted. In terms of biological role, pH-dependent, voltage-gated and anion-selective pore-forming peptide. This Actinidia deliciosa (Kiwi) protein is Kiwellin.